The following is a 586-amino-acid chain: Ezrin (586 aa).

The FERM domain maps to 2 to 295 (PKPINVRVTT…GNHELYMRRR (294 aa)). K60 is modified (N6-acetyllysine). The [IL]-x-C-x-x-[DE] motif motif lies at 115–120 (IYCPPE). A Phosphotyrosine; by PDGFR modification is found at Y146. Residues 244–586 (EIRNISFNDK…KQRIDEFEAM (343 aa)) form an interaction with SCYL3 region. Residues 302-462 (VQQMKAQARE…QDDLVKTKEE (161 aa)) adopt a coiled-coil conformation. Residues 305–340 (MKAQAREEKHQKQLERQQLESEKKRREAVEQEKEQM) are disordered. Residues 308–340 (QAREEKHQKQLERQQLESEKKRREAVEQEKEQM) are compositionally biased toward basic and acidic residues. Y354 bears the Phosphotyrosine; by PDGFR mark. The residue at position 366 (S366) is a Phosphoserine. Y478 is subject to Phosphotyrosine. A Phosphoserine modification is found at S535. T567 is modified (phosphothreonine; by ROCK2 and PKC/PRKCI).

Interacts with PALS1. Found in a complex with EZR, PODXL and NHERF2. Interacts with MCC, PLEKHG6, PODXL, SCYL3/PACE1, NHERF1, NHERF2 and TMEM8B. Interacts (when phosphorylated) with FES/FPS. Interacts with dimeric S100P, the interaction may be activating through unmasking of F-actin binding sites. Identified in complexes that contain VIM, EZR, AHNAK, BFSP1, BFSP2, ANK2, PLEC, PRX and spectrin. Detected in a complex composed of at least EZR, AHNAK, PPL and PRX. Interacts with PDPN (via cytoplasmic domain); activates RHOA and promotes epithelial-mesenchymal transition. Interacts with SPN/CD43 cytoplasmic tail, CD44 and ICAM2. Interacts with SLC9A3; interaction targets SLC9A3 to the apical membrane. Interacts with SLC9A1; regulates interactions of SLC9A1 with cytoskeletal and promotes stress fiber formation. Interacts with CLIC5; may work together in a complex which also includes RDX and MYO6 to stabilize linkages between the plasma membrane and subjacent actin cytoskeleton at the base of stereocilia. Phosphorylated by tyrosine-protein kinases. Phosphorylation by ROCK2 suppresses the head-to-tail association of the N-terminal and C-terminal halves resulting in an opened conformation which is capable of actin and membrane-binding. Post-translationally, S-nitrosylation is induced by interferon-gamma and oxidatively-modified low-densitity lipoprotein (LDL(ox)) possibly implicating the iNOS-S100A8/9 transnitrosylase complex.

The protein resides in the apical cell membrane. It localises to the cell projection. It is found in the microvillus membrane. Its subcellular location is the ruffle membrane. The protein localises to the cytoplasm. The protein resides in the cell cortex. It localises to the cytoskeleton. It is found in the microvillus. With respect to regulation, a head-to-tail association, of the N-terminal and C-terminal halves results in a closed conformation (inactive form) which is incapable of actin or membrane-binding. Probably involved in connections of major cytoskeletal structures to the plasma membrane. In epithelial cells, required for the formation of microvilli and membrane ruffles on the apical pole. Along with PLEKHG6, required for normal macropinocytosis. The chain is Ezrin (EZR) from Oryctolagus cuniculus (Rabbit).